The sequence spans 239 residues: Sugar fermentation stimulation protein homolog (239 aa).

It belongs to the SfsA family.

This Shewanella woodyi (strain ATCC 51908 / MS32) protein is Sugar fermentation stimulation protein homolog.